We begin with the raw amino-acid sequence, 550 residues long: MEKSNQPVHVTLSELKDGDKEIVDAEFLVDLLESYRFGKDNVPAREFRSKAAATAPAPVNTTEIELEEDNDGSQAQGNNSVSESTSSLFSDSDPIVLESTVSETGSNEESETGSNEENGNNWLESSSTNLPNVENKRQRNGEDCEIEEEEENNERSLSDSEEKSNLEKLLGTQENYELGNEDEEKNERSSSDSEEKSNLENLLATQENYELYCPSCSTCITRNVVLKKRKRGKHVNSSLDLKPDIPVVEPDEPSDIEEMESPVKVYVPETRIEDDQEDKEGTIFTCLVCDLKYFIRLGTKFLQLDYIRGKPVEKSVEEYIDVRKSINTTQSPPQIQPDGERFAIELLKSTVYGGLTETITSLGVVSSASASGSSTMNILALAVANLAGGLIVLAQNFQDLRNSSDQEKDRYEELLGRRTKSRIHILVAVMSYIFFGLIPPLVYAFSFYETGIKNYKLISVFLGSLVCVILLGSIKVYVRKPTNSCGSTKAYLKSAAYYTSIVVASCGISYVVGDIMGEYIEKLSLVGLDQISITSPCYGIKPEECRFTSF.

Positions 46 to 199 (EFRSKAAATA…SSDSEEKSNL (154 aa)) are disordered. Low complexity-rich tracts occupy residues 80-105 (SVSE…SETG) and 112-121 (TGSNEENGNN). The segment covering 122 to 132 (WLESSSTNLPN) has biased composition (polar residues). A coiled-coil region spans residues 134 to 165 (ENKRQRNGEDCEIEEEEENNERSLSDSEEKSN). Positions 143–152 (DCEIEEEEEN) are enriched in acidic residues. Composition is skewed to basic and acidic residues over residues 153–166 (NERS…KSNL) and 185–198 (KNER…EKSN). A run of 4 helical transmembrane segments spans residues 374–394 (STMN…IVLA), 425–445 (ILVA…VYAF), 458–478 (ISVF…KVYV), and 500–520 (SIVV…GEYI). Positions 393–418 (LAQNFQDLRNSSDQEKDRYEELLGRR) form a coiled coil.

Belongs to the CCC1 family. As to quaternary structure, interacts directly or indirectly with NAI2.

Its subcellular location is the endoplasmic reticulum membrane. Its function is as follows. May sequester excess cytosolic iron and manganese into endoplasmic reticulum to reduce metal ion toxicity. Not essential for the accumulation of ER body components, including PYK10. The sequence is that of Membrane protein of ER body 2 (MEB2) from Arabidopsis thaliana (Mouse-ear cress).